A 157-amino-acid polypeptide reads, in one-letter code: Crossover junction endodeoxyribonuclease RuvC (157 aa).

Catalysis depends on residues aspartate 7, glutamate 67, and aspartate 139. Mg(2+) contacts are provided by aspartate 7, glutamate 67, and aspartate 139.

This sequence belongs to the RuvC family. In terms of assembly, homodimer which binds Holliday junction (HJ) DNA. The HJ becomes 2-fold symmetrical on binding to RuvC with unstacked arms; it has a different conformation from HJ DNA in complex with RuvA. In the full resolvosome a probable DNA-RuvA(4)-RuvB(12)-RuvC(2) complex forms which resolves the HJ. It depends on Mg(2+) as a cofactor.

It localises to the cytoplasm. It catalyses the reaction Endonucleolytic cleavage at a junction such as a reciprocal single-stranded crossover between two homologous DNA duplexes (Holliday junction).. The RuvA-RuvB-RuvC complex processes Holliday junction (HJ) DNA during genetic recombination and DNA repair. Endonuclease that resolves HJ intermediates. Cleaves cruciform DNA by making single-stranded nicks across the HJ at symmetrical positions within the homologous arms, yielding a 5'-phosphate and a 3'-hydroxyl group; requires a central core of homology in the junction. The consensus cleavage sequence is 5'-(A/T)TT(C/G)-3'. Cleavage occurs on the 3'-side of the TT dinucleotide at the point of strand exchange. HJ branch migration catalyzed by RuvA-RuvB allows RuvC to scan DNA until it finds its consensus sequence, where it cleaves and resolves the cruciform DNA. The sequence is that of Crossover junction endodeoxyribonuclease RuvC from Prochlorococcus marinus (strain MIT 9312).